The chain runs to 624 residues: Actin-related protein 8 (624 aa).

The residue at position 1 (M1) is an N-acetylmethionine. The segment covering 1–25 (MTQAEKGEAENGKEKGGEKEKEQRG) has biased composition (basic and acidic residues). The segment at 1–29 (MTQAEKGEAENGKEKGGEKEKEQRGVKRP) is disordered. S55 and T56 together coordinate ATP. S132 carries the post-translational modification Phosphoserine. 283–286 (DVGD) contributes to the ATP binding site. The residue at position 412 (S412) is a Phosphoserine. The segment at 430 to 462 (SKQEQSAKATADRKSASKPIGFEGDLRGQSSDL) is disordered.

It belongs to the actin family. ARP8 subfamily. In terms of assembly, component of the chromatin remodeling INO80 complex; specifically part of a complex module associated with the DBINO domain of INO80. Exists as monomers and dimers, but the dimer is most probably the biologically relevant form required for stable interactions with histones that exploits the twofold symmetry of the nucleosome core.

It localises to the nucleus. The protein resides in the chromosome. In terms of biological role, plays an important role in the functional organization of mitotic chromosomes. Exhibits low basal ATPase activity, and unable to polymerize. Functionally, proposed core component of the chromatin remodeling INO80 complex which is involved in transcriptional regulation, DNA replication and probably DNA repair. Required for the recruitment of INO80 (and probably the INO80 complex) to sites of DNA damage Strongly prefer nucleosomes and H3-H4 tetramers over H2A-H2B dimers, suggesting it may act as a nucleosome recognition module within the complex. In Bos taurus (Bovine), this protein is Actin-related protein 8 (ACTR8).